The sequence spans 415 residues: Serine--tRNA ligase (415 aa).

L-serine is bound at residue 231–233; it reads TAE. 262–264 contributes to the ATP binding site; it reads RSE. Residue glutamate 285 coordinates L-serine. 349–352 serves as a coordination point for ATP; it reads EISS. Serine 383 contributes to the L-serine binding site.

Belongs to the class-II aminoacyl-tRNA synthetase family. Type-1 seryl-tRNA synthetase subfamily. In terms of assembly, homodimer. The tRNA molecule binds across the dimer.

The protein localises to the cytoplasm. The catalysed reaction is tRNA(Ser) + L-serine + ATP = L-seryl-tRNA(Ser) + AMP + diphosphate + H(+). The enzyme catalyses tRNA(Sec) + L-serine + ATP = L-seryl-tRNA(Sec) + AMP + diphosphate + H(+). Its pathway is aminoacyl-tRNA biosynthesis; selenocysteinyl-tRNA(Sec) biosynthesis; L-seryl-tRNA(Sec) from L-serine and tRNA(Sec): step 1/1. Catalyzes the attachment of serine to tRNA(Ser). Is also able to aminoacylate tRNA(Sec) with serine, to form the misacylated tRNA L-seryl-tRNA(Sec), which will be further converted into selenocysteinyl-tRNA(Sec). The protein is Serine--tRNA ligase of Helicobacter acinonychis (strain Sheeba).